Here is a 228-residue protein sequence, read N- to C-terminus: Ribosomal RNA small subunit methyltransferase G (228 aa).

S-adenosyl-L-methionine contacts are provided by residues G89, L94, 140–141 (VE), and R159.

It belongs to the methyltransferase superfamily. RNA methyltransferase RsmG family.

The protein resides in the cytoplasm. It carries out the reaction guanosine(527) in 16S rRNA + S-adenosyl-L-methionine = N(7)-methylguanosine(527) in 16S rRNA + S-adenosyl-L-homocysteine. Its function is as follows. Specifically methylates the N7 position of guanine in position 527 of 16S rRNA. This is Ribosomal RNA small subunit methyltransferase G from Burkholderia vietnamiensis (strain G4 / LMG 22486) (Burkholderia cepacia (strain R1808)).